The chain runs to 797 residues: Protein tamozhennic (797 aa).

A PUB domain is found at 79–146 (QNAIVAFETI…AAEDTFVLEG (68 aa)). Disordered stretches follow at residues 515 to 570 (AGGI…ISDL) and 638 to 697 (LSIT…SAGV). Positions 662–679 (EKARTLDKKSGTGRREAK) are enriched in basic and acidic residues. A RanBP2-type zinc finger spans residues 735–766 (IVTSPNEWSCSFCTFLNPDTKRICEMCCRSKD).

As to quaternary structure, homomultimer. Binds to dl and msl-1 via their nuclear localization signal (NLS). Also binds to Ran, Ran-like and mbo.

Its subcellular location is the cytoplasm. In terms of biological role, has an essential role during oogenesis and embryogenesis, perhaps in modulating the levels of nuclear import of additional proteins. Modulates the nuclear import of dorsal (dl), Dif and male specific lethal 1 (msl-1). Negatively regulates nuclear import of dl and controls the accumulation of dl in the nucleus after immune challenge. The polypeptide is Protein tamozhennic (tamo) (Drosophila melanogaster (Fruit fly)).